The following is an 86-amino-acid chain: Omega-theraphotoxin-Hhn1b (86 aa).

Residues 1–21 (MKSIVFVALFGLALLAVVCSA) form the signal peptide. Residues 22–50 (SEDAHKELLKEVVRAMVVDKTDAVQAEER) constitute a propeptide that is removed on maturation. Intrachain disulfides connect cysteine 52-cysteine 66, cysteine 59-cysteine 71, and cysteine 65-cysteine 78.

This sequence belongs to the neurotoxin 10 (Hwtx-1) family. 17 (Hntx-9) subfamily. As to expression, expressed by the venom gland.

The protein localises to the secreted. Ion channel inhibitor. The protein is Omega-theraphotoxin-Hhn1b of Cyriopagopus hainanus (Chinese bird spider).